The sequence spans 369 residues: Endoglucanase (369 aa).

Positions 1–22 (MMTMLRGWITMIVMLTAINAQA) are cleaved as a signal peptide. Catalysis depends on Glu-56, which acts as the Proton donor. The active-site Nucleophile is Asp-117.

Belongs to the glycosyl hydrolase 8 (cellulase D) family.

The protein resides in the secreted. It carries out the reaction Endohydrolysis of (1-&gt;4)-beta-D-glucosidic linkages in cellulose, lichenin and cereal beta-D-glucans.. It participates in glycan metabolism; bacterial cellulose biosynthesis. Functionally, hydrolyzes carboxymethylcellulose. This is Endoglucanase (bcsZ) from Salmonella typhi.